A 1395-amino-acid polypeptide reads, in one-letter code: G2/mitotic-specific cyclin-B3 (1395 aa).

The disordered stretch occupies residues 1–59 (MLLPLPPQSSKPVPKKSQSSKIVPSHHDPSEKTGENCQTKISPSSLQESPSSLQGALKK). Positions 10–23 (SKPVPKKSQSSKIV) are enriched in low complexity. The segment covering 25–34 (SHHDPSEKTG) has biased composition (basic and acidic residues). Residues 42-54 (SPSSLQESPSSLQ) show a composition bias toward low complexity. Residues 60–68 (RSAFEDLTN) carry the D-box motif. Disordered stretches follow at residues 418–464 (LSIK…PTEE) and 1074–1122 (ATMT…DSSD). Residues 419–431 (SIKEKPSTEKESF) show a composition bias toward basic and acidic residues. A compositionally biased stretch (low complexity) spans 1082 to 1093 (SRTTTESSACES).

The protein belongs to the cyclin family. Cyclin AB subfamily. In terms of assembly, interacts with CDK2 kinase. Post-translationally, ubiquitinated. Ubiquitination leads to its degradation during anaphase entry, after degradation of CCNB1. Testis specific. In testis, it is expressed in developing germ cells, but not in Leydig cells. Weakly or not expressed in other tissues.

Its subcellular location is the nucleus. Its function is as follows. Cyclins are positive regulatory subunits of the cyclin-dependent kinases (CDKs), and thereby play an essential role in the control of the cell cycle, notably via their destruction during cell division. Its tissue specificity suggest that it may be required during early meiotic prophase I. The polypeptide is G2/mitotic-specific cyclin-B3 (CCNB3) (Homo sapiens (Human)).